Consider the following 478-residue polypeptide: Ribosomal RNA small subunit methyltransferase F (478 aa).

Residues 123-129 (AAAPGSK), Glu147, Asp174, and Asp192 contribute to the S-adenosyl-L-methionine site. Cys245 (nucleophile) is an active-site residue.

The protein belongs to the class I-like SAM-binding methyltransferase superfamily. RsmB/NOP family.

It localises to the cytoplasm. The enzyme catalyses cytidine(1407) in 16S rRNA + S-adenosyl-L-methionine = 5-methylcytidine(1407) in 16S rRNA + S-adenosyl-L-homocysteine + H(+). Functionally, specifically methylates the cytosine at position 1407 (m5C1407) of 16S rRNA. The sequence is that of Ribosomal RNA small subunit methyltransferase F from Vibrio campbellii (strain ATCC BAA-1116).